A 294-amino-acid chain; its full sequence is UDP-3-O-acyl-N-acetylglucosamine deacetylase (294 aa).

The Zn(2+) site is built by H75, H232, and D236. H259 (proton donor) is an active-site residue.

This sequence belongs to the LpxC family. It depends on Zn(2+) as a cofactor.

The catalysed reaction is a UDP-3-O-[(3R)-3-hydroxyacyl]-N-acetyl-alpha-D-glucosamine + H2O = a UDP-3-O-[(3R)-3-hydroxyacyl]-alpha-D-glucosamine + acetate. It participates in glycolipid biosynthesis; lipid IV(A) biosynthesis; lipid IV(A) from (3R)-3-hydroxytetradecanoyl-[acyl-carrier-protein] and UDP-N-acetyl-alpha-D-glucosamine: step 2/6. In terms of biological role, catalyzes the hydrolysis of UDP-3-O-myristoyl-N-acetylglucosamine to form UDP-3-O-myristoylglucosamine and acetate, the committed step in lipid A biosynthesis. This Campylobacter jejuni subsp. doylei (strain ATCC BAA-1458 / RM4099 / 269.97) protein is UDP-3-O-acyl-N-acetylglucosamine deacetylase.